We begin with the raw amino-acid sequence, 388 residues long: S-adenosylmethionine synthase (388 aa).

Histidine 16 lines the ATP pocket. Aspartate 18 serves as a coordination point for Mg(2+). Glutamate 44 contributes to the K(+) binding site. Glutamate 57 and glutamine 100 together coordinate L-methionine. The segment at 100–110 (QSPDIAQGVDK) is flexible loop. ATP-binding positions include 167–169 (DAK), 233–234 (RF), aspartate 242, 248–249 (RK), alanine 265, and lysine 269. Aspartate 242 lines the L-methionine pocket. Lysine 273 lines the L-methionine pocket.

This sequence belongs to the AdoMet synthase family. As to quaternary structure, homotetramer; dimer of dimers. Mg(2+) serves as cofactor. It depends on K(+) as a cofactor.

The protein resides in the cytoplasm. The enzyme catalyses L-methionine + ATP + H2O = S-adenosyl-L-methionine + phosphate + diphosphate. Its pathway is amino-acid biosynthesis; S-adenosyl-L-methionine biosynthesis; S-adenosyl-L-methionine from L-methionine: step 1/1. Functionally, catalyzes the formation of S-adenosylmethionine (AdoMet) from methionine and ATP. The overall synthetic reaction is composed of two sequential steps, AdoMet formation and the subsequent tripolyphosphate hydrolysis which occurs prior to release of AdoMet from the enzyme. The sequence is that of S-adenosylmethionine synthase from Polynucleobacter asymbioticus (strain DSM 18221 / CIP 109841 / QLW-P1DMWA-1) (Polynucleobacter necessarius subsp. asymbioticus).